Consider the following 355-residue polypeptide: Peptide chain release factor 1 (355 aa).

An N5-methylglutamine modification is found at Gln233.

Belongs to the prokaryotic/mitochondrial release factor family. In terms of processing, methylated by PrmC. Methylation increases the termination efficiency of RF1.

It is found in the cytoplasm. Peptide chain release factor 1 directs the termination of translation in response to the peptide chain termination codons UAG and UAA. This Caldicellulosiruptor bescii (strain ATCC BAA-1888 / DSM 6725 / KCTC 15123 / Z-1320) (Anaerocellum thermophilum) protein is Peptide chain release factor 1.